Here is a 138-residue protein sequence, read N- to C-terminus: Large ribosomal subunit protein uL16 (138 aa).

Over residues M1–G16 the composition is skewed to basic residues. Positions M1–G24 are disordered.

The protein belongs to the universal ribosomal protein uL16 family. As to quaternary structure, part of the 50S ribosomal subunit.

Its function is as follows. Binds 23S rRNA and is also seen to make contacts with the A and possibly P site tRNAs. In Arthrobacter sp. (strain FB24), this protein is Large ribosomal subunit protein uL16.